The following is a 102-amino-acid chain: Small ribosomal subunit protein uS10 (102 aa).

It belongs to the universal ribosomal protein uS10 family. Part of the 30S ribosomal subunit.

Functionally, involved in the binding of tRNA to the ribosomes. The polypeptide is Small ribosomal subunit protein uS10 (Akkermansia muciniphila (strain ATCC BAA-835 / DSM 22959 / JCM 33894 / BCRC 81048 / CCUG 64013 / CIP 107961 / Muc)).